We begin with the raw amino-acid sequence, 293 residues long: Putative ribose uptake protein RbsU (293 aa).

Helical transmembrane passes span Ser-2–Ser-24, Ile-34–Phe-56, Leu-63–Phe-80, Thr-95–Ile-117, Ile-122–Trp-139, Ala-154–Ala-171, Leu-180–Met-202, Ile-212–Ala-234, Leu-241–Leu-263, and Val-273–Ile-292.

Belongs to the GRP transporter (TC 2.A.7.5) family.

The protein resides in the cell membrane. Functionally, could be involved in the uptake of ribose. The sequence is that of Putative ribose uptake protein RbsU (rbsU) from Staphylococcus aureus (strain Mu50 / ATCC 700699).